The chain runs to 1270 residues: Activating transcription factor 7-interacting protein 1 (1270 aa).

M1 carries the post-translational modification N-acetylmethionine. K33 is covalently cross-linked (Glycyl lysine isopeptide (Lys-Gly) (interchain with G-Cter in SUMO2)). 2 positions are modified to phosphoserine: S57 and S113. Disordered stretches follow at residues D104 to D223 and T235 to T402. Position 118 is a phosphothreonine (T118). 2 stretches are compositionally biased toward low complexity: residues G132–D203 and D248–L269. 2 stretches are compositionally biased toward basic and acidic residues: residues S310–E327 and D333–N343. A compositionally biased stretch (acidic residues) spans A347–D356. Residues R363–E373 show a composition bias toward basic and acidic residues. S445, S473, S474, S477, S479, and S496 each carry phosphoserine. 4 disordered regions span residues T455–R570, E658–N685, P822–S862, and R886–P906. Residues S474–S486 are compositionally biased toward polar residues. Acidic residues predominate over residues S496 to E509. Residues S524–S552 are compositionally biased toward basic and acidic residues. The Nuclear localization signal signature appears at R553–R571. A Glycyl lysine isopeptide (Lys-Gly) (interchain with G-Cter in SUMO2) cross-link involves residue K558. S559 carries the phosphoserine modification. The tract at residues M562 to I817 is interaction with SETDB1. Residues K617–E665 are a coiled coil. S673 is modified (phosphoserine). Positions P822–S834 are enriched in polar residues. Low complexity predominate over residues K843–S854. At S899 the chain carries Phosphoserine. Glycyl lysine isopeptide (Lys-Gly) (interchain with G-Cter in SUMO2) cross-links involve residues K910 and K938. Polar residues-rich tracts occupy residues T918 to A942 and D950 to S964. Disordered stretches follow at residues T918–T1026 and S1115–L1160. The interaction with SUMO stretch occupies residues G965–E975. 2 stretches are compositionally biased toward polar residues: residues T988 to V999 and G1016 to T1026. The segment covering P1134–L1151 has biased composition (pro residues). The interval E1154–S1270 is interaction with MBD1. The 111-residue stretch at L1160 to S1270 folds into the Fibronectin type-III domain.

Belongs to the MCAF family. As to quaternary structure, interacts with MBD1; the interaction is enhanced when MBD1 is sumoylated. Interacts with SETDB1; the interaction protects SETDB1 from proteasomal degradation and is required to stimulate histone methyltransferase activity and facilitate the conversion of dimethylated to trimethylated H3 'Lys-9'. Interacts with SUMO ubiquitin-like proteins (SUMO1, SUNO2 and SUMO3), with a preference for SUMO2 and SUMO3. Interacts with SP1, ATF7 and ZHX1. Interacts with the general transcription machinery, including ERCC2, ERCC3, GTF2E1, GTF2E2 and POLR2A. (Microbial infection) Interacts with Epstein-Barr virus BRLF1/Rta protein, leading to the regulation of host genes in Epstein-Barr virus-infected cells. Detected at low levels in breast, lung and stomach; highly up-regulated in the corresponding cancerous tissues (at protein level).

The protein localises to the nucleus. Functionally, recruiter that couples transcriptional factors to general transcription apparatus and thereby modulates transcription regulation and chromatin formation. Can both act as an activator or a repressor depending on the context. Required for HUSH-mediated heterochromatin formation and gene silencing. Mediates MBD1-dependent transcriptional repression, probably by recruiting complexes containing SETDB1. Stabilizes SETDB1, is required to stimulate histone methyltransferase activity of SETDB1 and facilitates the conversion of dimethylated to trimethylated H3 'Lys-9' (H3K9me3). The complex formed with MBD1 and SETDB1 represses transcription and couples DNA methylation and histone H3 'Lys-9' trimethylation (H3K9me3). Facilitates telomerase TERT and TERC gene expression by SP1 in cancer cells. The protein is Activating transcription factor 7-interacting protein 1 of Homo sapiens (Human).